A 191-amino-acid polypeptide reads, in one-letter code: Calcium and integrin-binding protein 1 (191 aa).

Glycine 2 carries N-myristoyl glycine lipidation. 2 EF-hand domains span residues 103 to 138 (TPDIKSHYAFRIFDFDDDGTLDREDLSRLVNCLTGE) and 148 to 183 (EMKQLIDNILEESDIDRDGTINLSEFQHVISRSPDF). The Ca(2+) site is built by aspartate 116, aspartate 118, aspartate 120, threonine 122, aspartate 127, aspartate 161, aspartate 163, aspartate 165, threonine 167, and glutamate 172.

As to quaternary structure, monomer. Interacts with the heterodimeric integrin alpha-IIb/beta3 (ITGA2B-ITGB3). Interacts with ITGA2B (via cytoplasmic domain); the interaction is direct and calcium-dependent. Interacts with the protein kinases PLK2/SNK and PRKDC (via the region immediately upstream of the kinase domain). Interacts with PLK3; the interaction inhibits PLK3 kinase activity. Interacts with PSEN2. Interacts (via C-terminus) with F8. Interacts with NBR1 (via C-terminus). Interacts with FEZ1 (via C-terminus). Interacts with UBR5 (via C-terminus); the interaction is sensitive to DNA damage, and may target CIB1 for ubiquitin-mediated degradation. Interacts with IFI6; the interaction is direct. Interacts with BCL2. Interacts with ITPR3; the interaction occurs in a calcium dependent manner. Interacts with PTK2/FAK1. Interacts with MAP3K5; the interaction inhibits MAP3K5 activation by phosphorylation, and its subsequent interaction with TRAF2. Interacts (via C-terminal region) with STMN2 (via the N-terminal region); the interaction is direct, occurs in a calcium-dependent manner and attenuates the STMN2-induced neurite outgrowth inhibition. Interacts with SPHK1, the interaction occurs in a calcium-dependent manner. Interacts with ITGA2B (via C-terminal cytoplasmic tail); the interaction occurs upon platelet aggregation and is stabilized/increased in a calcium and magnesium-dependent manner. Interacts with PAK1 (via N-terminal region); the interaction is direct and occurs in a calcium-dependent manner. Interacts with RAC3 (via C-terminal region); the interaction induces their association with the cytoskeleton upon alpha-IIb/beta3 integrin-mediated adhesion. Interacts with ITGA5 and ITGAV. Interacts with MYO1C. Interacts with ITGA2B (via C-terminal cytoplasmic tail region). Interacts (via C-terminal region) with PPP3R1; the interaction increases upon cardiomyocytes hypertrophy. Interacts with CACNA1C; the interaction increases upon cardiomyocytes hypertrophy. Interacts with TAS1R2 (via C-terminus); this interaction is independent of the myristoylation state of CIB1. Interacts and forms a complex with TMC6 and TMC8; the interaction stabilizes each component of the complex. Expressed in cardiomyocytes and neurons (at protein level). Expressed during early neural development.

The protein resides in the membrane. Its subcellular location is the cell membrane. It localises to the sarcolemma. The protein localises to the apical cell membrane. It is found in the cell projection. The protein resides in the ruffle membrane. Its subcellular location is the filopodium tip. It localises to the growth cone. The protein localises to the lamellipodium. It is found in the cytoplasm. The protein resides in the cytoskeleton. Its subcellular location is the microtubule organizing center. It localises to the centrosome. The protein localises to the perinuclear region. It is found in the nucleus. The protein resides in the neuron projection. Its subcellular location is the perikaryon. Calcium-binding protein that plays a role in the regulation of numerous cellular processes, such as cell differentiation, cell division, cell proliferation, cell migration, thrombosis, angiogenesis, cardiac hypertrophy and apoptosis. Involved in bone marrow megakaryocyte differentiation by negatively regulating thrombopoietin-mediated signaling pathway. Participates in the endomitotic cell cycle of megakaryocyte, a form of mitosis in which both karyokinesis and cytokinesis are interrupted. Plays a role in integrin signaling by negatively regulating alpha-IIb/beta3 activation in thrombin-stimulated megakaryocytes preventing platelet aggregation. Up-regulates PTK2/FAK1 activity, and is also needed for the recruitment of PTK2/FAK1 to focal adhesions; it thus appears to play an important role in focal adhesion formation. Positively regulates cell migration on fibronectin in a CDC42-dependent manner, the effect being negatively regulated by PAK1. Functions as a negative regulator of stress activated MAP kinase (MAPK) signaling pathways. Down-regulates inositol 1,4,5-trisphosphate receptor-dependent calcium signaling. Involved in sphingosine kinase SPHK1 translocation to the plasma membrane in a N-myristoylation-dependent manner preventing TNF-alpha-induced apoptosis. Regulates serine/threonine-protein kinase PLK3 activity for proper completion of cell division progression. Plays a role in microtubule (MT) dynamics during neuronal development; disrupts the MT depolymerization activity of STMN2 attenuating NGF-induced neurite outgrowth and the MT reorganization at the edge of lamellipodia. Promotes cardiomyocyte hypertrophy via activation of the calcineurin/NFAT signaling pathway. Stimulates calcineurin PPP3R1 activity by mediating its anchoring to the sarcolemma. In ischemia-induced (pathological or adaptive) angiogenesis, stimulates endothelial cell proliferation, migration and microvessel formation by activating the PAK1 and ERK1/ERK2 signaling pathway. Also promotes cancer cell survival and proliferation. May regulate cell cycle and differentiation of spermatogenic germ cells, and/or differentiation of supporting Sertoli cells. Forms a complex with TMC6/EVER1 and TMC8/EVER2 in lymphocytes and keratynocytes where CIB1 stabilizes TMC6 and TMC8 levels and reciprocally. In Rattus norvegicus (Rat), this protein is Calcium and integrin-binding protein 1 (Cib1).